A 107-amino-acid chain; its full sequence is ESAT-6-like protein EsxD (107 aa).

The protein belongs to the WXG100 family. CFP-10 subfamily.

It localises to the secreted. This Mycobacterium tuberculosis (strain ATCC 25618 / H37Rv) protein is ESAT-6-like protein EsxD.